Here is a 326-residue protein sequence, read N- to C-terminus: Putative ribose-phosphate pyrophosphokinase 2 (326 aa).

ATP contacts are provided by residues 43-45 and 102-103; these read DGE and RQ. Mg(2+) is bound at residue His136. D-ribose 5-phosphate is bound by residues Asp225 and 229–233; that span reads NTGKT.

It belongs to the ribose-phosphate pyrophosphokinase family. Class I subfamily. In terms of assembly, homohexamer. Mg(2+) is required as a cofactor.

It is found in the cytoplasm. It carries out the reaction D-ribose 5-phosphate + ATP = 5-phospho-alpha-D-ribose 1-diphosphate + AMP + H(+). Its pathway is metabolic intermediate biosynthesis; 5-phospho-alpha-D-ribose 1-diphosphate biosynthesis; 5-phospho-alpha-D-ribose 1-diphosphate from D-ribose 5-phosphate (route I): step 1/1. Functionally, involved in the biosynthesis of the central metabolite phospho-alpha-D-ribosyl-1-pyrophosphate (PRPP) via the transfer of pyrophosphoryl group from ATP to 1-hydroxyl of ribose-5-phosphate (Rib-5-P). This is Putative ribose-phosphate pyrophosphokinase 2 from Streptococcus pyogenes serotype M3 (strain SSI-1).